Here is a 155-residue protein sequence, read N- to C-terminus: Microsomal glutathione S-transferase 1 (155 aa).

At N3–E9 the chain is on the lumenal side. A helical transmembrane segment spans residues N10–A33. The Cytoplasmic segment spans residues T34 to Y62. Glutathione is bound at residue R38. N6-acetyllysine occurs at positions 42, 55, and 60. The helical transmembrane segment at L63–S96 threads the bilayer. Glutathione is bound by residues R73, R74, H76, and E81. Residues G97–D99 lie on the Lumenal side of the membrane. A helical membrane pass occupies residues L100–T123. Glutathione is bound at residue Y121. The Cytoplasmic segment spans residues P124 to P128. Residues N129–L148 traverse the membrane as a helical segment. Over L149–L155 the chain is Lumenal.

Belongs to the MAPEG family. As to quaternary structure, homotrimer; The trimer binds only one molecule of glutathione.

It localises to the endoplasmic reticulum membrane. Its subcellular location is the mitochondrion outer membrane. It catalyses the reaction RX + glutathione = an S-substituted glutathione + a halide anion + H(+). In terms of biological role, conjugation of reduced glutathione to a wide number of exogenous and endogenous hydrophobic electrophiles. The polypeptide is Microsomal glutathione S-transferase 1 (MGST1) (Bos taurus (Bovine)).